The following is a 259-amino-acid chain: Major cell-binding factor (259 aa).

The signal sequence occupies residues 1–26; it reads MVFRKSLLKLAVFALGACVAFSNANA.

Belongs to the bacterial solute-binding protein 3 family.

It is found in the cell surface. Its function is as follows. Common antigen and a major cell adherence molecule. Most probably involved, with PEB1C, in a binding-protein-dependent transport system for an amino acid. May be involved in binding to intestinal cells. The protein is Major cell-binding factor (peb1A) of Campylobacter jejuni subsp. jejuni serotype O:23/36 (strain 81-176).